We begin with the raw amino-acid sequence, 179 residues long: Ribosome maturation factor RimM (179 aa).

The region spanning 102–179 is the PRC barrel domain; the sequence is DGEYYWYQLE…EMKVEWDADF (78 aa).

It belongs to the RimM family. As to quaternary structure, binds ribosomal protein uS19.

The protein localises to the cytoplasm. An accessory protein needed during the final step in the assembly of 30S ribosomal subunit, possibly for assembly of the head region. Essential for efficient processing of 16S rRNA. May be needed both before and after RbfA during the maturation of 16S rRNA. It has affinity for free ribosomal 30S subunits but not for 70S ribosomes. This Pseudomonas syringae pv. tomato (strain ATCC BAA-871 / DC3000) protein is Ribosome maturation factor RimM.